The chain runs to 308 residues: 3'(2'),5'-bisphosphate nucleotidase 1 (308 aa).

Residue Ala2 is modified to N-acetylalanine. Asp51 functions as the Proton acceptor in the catalytic mechanism. The Mg(2+) site is built by Glu74, Asp117, Leu119, and Asp120. Thr122 acts as the Proton acceptor in catalysis. Thr122 carries the phosphothreonine modification. Positions 195, 198, 220, and 224 each coordinate AMP. Phosphoserine is present on Ser240. Lys244 carries the N6-succinyllysine modification. Residue Asp247 participates in Mg(2+) binding.

Belongs to the inositol monophosphatase superfamily. The cofactor is Mg(2+). Widely expressed. Highly expressed in kidney.

It catalyses the reaction adenosine 3',5'-bisphosphate + H2O = AMP + phosphate. It carries out the reaction adenosine 2',5'-bisphosphate + H2O = AMP + phosphate. The catalysed reaction is 3'-phosphoadenylyl sulfate + H2O = adenosine 5'-phosphosulfate + phosphate. The enzyme catalyses 1D-myo-inositol 1,4-bisphosphate + H2O = 1D-myo-inositol 4-phosphate + phosphate. It catalyses the reaction 1D-myo-inositol 1,3,4-trisphosphate + H2O = 1D-myo-inositol 3,4-bisphosphate + phosphate. With respect to regulation, uncompetitively inhibited by Li(+) (IC(50)=157 uM). PAP hydrolysis is competitively inhibited by PAPS (IC(50)=0.7 uM) and by inositol 1,4-bisphosphate (IC(50)=15 uM). Its function is as follows. Phosphatase that converts 3'(2')-phosphoadenosine 5'-phosphate (PAP) to AMP and adenosine 3'-phosphate 5'-phosphosulfate (PAPS) to adenosine 5'-phosphosulfate (APS). Is also able to hydrolyze inositol 1,4-bisphosphate (Ins(1,4)P2) and inositol 1,3,4-trisphosphate (Ins(1,3,4)P3), and is not active on Ins(1)P, Ins(4)P, Ins(3,4)P2, Ins(1,4,5)P3, Ins(1,3,4,5)P4, Ins(1,3,4,5,6)P5 or InsP6. Probably prevents the toxic accumulation of PAP, a compound which inhibits a variety of proteins, including PAPS-utilizing enzymes such as sulfotransferases, and RNA processing enzymes. Could also play a role in inositol recycling and phosphoinositide metabolism. The polypeptide is 3'(2'),5'-bisphosphate nucleotidase 1 (Bpnt1) (Mus musculus (Mouse)).